Consider the following 308-residue polypeptide: tRNA dimethylallyltransferase (308 aa).

Residue 9–16 (GPTAVGKT) coordinates ATP. Residue 11-16 (TAVGKT) coordinates substrate. Residues 34 to 37 (DSMQ) are interaction with substrate tRNA.

It belongs to the IPP transferase family. In terms of assembly, monomer. Mg(2+) serves as cofactor.

It catalyses the reaction adenosine(37) in tRNA + dimethylallyl diphosphate = N(6)-dimethylallyladenosine(37) in tRNA + diphosphate. Catalyzes the transfer of a dimethylallyl group onto the adenine at position 37 in tRNAs that read codons beginning with uridine, leading to the formation of N6-(dimethylallyl)adenosine (i(6)A). The sequence is that of tRNA dimethylallyltransferase from Lactobacillus delbrueckii subsp. bulgaricus (strain ATCC BAA-365 / Lb-18).